The chain runs to 79 residues: Small ribosomal subunit protein bS18 (79 aa).

This sequence belongs to the bacterial ribosomal protein bS18 family. In terms of assembly, part of the 30S ribosomal subunit. Forms a tight heterodimer with protein bS6.

Functionally, binds as a heterodimer with protein bS6 to the central domain of the 16S rRNA, where it helps stabilize the platform of the 30S subunit. This is Small ribosomal subunit protein bS18 from Micrococcus luteus (strain ATCC 4698 / DSM 20030 / JCM 1464 / CCM 169 / CCUG 5858 / IAM 1056 / NBRC 3333 / NCIMB 9278 / NCTC 2665 / VKM Ac-2230) (Micrococcus lysodeikticus).